Reading from the N-terminus, the 588-residue chain is Adenine deaminase (588 aa).

Belongs to the metallo-dependent hydrolases superfamily. Adenine deaminase family. Homodimer. Mn(2+) serves as cofactor.

The enzyme catalyses adenine + H2O + H(+) = hypoxanthine + NH4(+). In Escherichia coli (strain SMS-3-5 / SECEC), this protein is Adenine deaminase.